The following is a 695-amino-acid chain: Elongation factor G 2 (695 aa).

The tr-type G domain maps to 5-280 (SLYRNIGIFA…AVVDYLPSPT (276 aa)). GTP contacts are provided by residues 14-21 (AHVDAGKT), 78-82 (DTPGH), and 132-135 (NKLD).

Belongs to the TRAFAC class translation factor GTPase superfamily. Classic translation factor GTPase family. EF-G/EF-2 subfamily.

The protein localises to the cytoplasm. Its function is as follows. Catalyzes the GTP-dependent ribosomal translocation step during translation elongation. During this step, the ribosome changes from the pre-translocational (PRE) to the post-translocational (POST) state as the newly formed A-site-bound peptidyl-tRNA and P-site-bound deacylated tRNA move to the P and E sites, respectively. Catalyzes the coordinated movement of the two tRNA molecules, the mRNA and conformational changes in the ribosome. This Vibrio cholerae serotype O1 (strain ATCC 39315 / El Tor Inaba N16961) protein is Elongation factor G 2.